We begin with the raw amino-acid sequence, 408 residues long: uncharacterized protein (408 aa).

Transmembrane regions (helical) follow at residues 9–29, 49–69, 77–97, 100–120, 135–155, 167–187, 216–236, 252–272, 283–303, 308–328, 340–360, and 373–393; these read WFVL…RNSF, VSVS…GFFI, IMAL…YSPN, VFSA…VGVT, LALA…SPIW, TYTI…VFGM, LIHI…IIDA, GMMA…GWLS, SILF…ILGI, LWYF…IPLT, LIGS…ALSV, and YLLI…IELV.

Belongs to the major facilitator superfamily.

The protein localises to the cell membrane. This is an uncharacterized protein from Bacillus subtilis (strain 168).